The chain runs to 201 residues: MRLYLASRSPRRRELLNQIGIDFDTVVFRDGMRADSETDETPLPGEKPVAYVERVARAKAIHGLKIVEERKLPMRPVLSADTTLEFNGEIIGKPVDRADAAAILRRLSGQTHRVLTGVAINHMGHTEYVLSSSEVTFREIDDEEIRHYVMSGEPMDKAGAYGIQGRAGLFVKHLAGSFTGVMGLPVCETGELLKRLGFRPL.

Residue Asp81 is the Proton acceptor of the active site.

It belongs to the Maf family. YhdE subfamily. A divalent metal cation is required as a cofactor.

The protein localises to the cytoplasm. It catalyses the reaction dTTP + H2O = dTMP + diphosphate + H(+). The enzyme catalyses UTP + H2O = UMP + diphosphate + H(+). In terms of biological role, nucleoside triphosphate pyrophosphatase that hydrolyzes dTTP and UTP. May have a dual role in cell division arrest and in preventing the incorporation of modified nucleotides into cellular nucleic acids. The sequence is that of dTTP/UTP pyrophosphatase from Dechloromonas aromatica (strain RCB).